The chain runs to 817 residues: Collagen-like protein 4 (817 aa).

Collagen-like domains lie at 83-142 (GDTG…KGQD), 145-264 (GSKG…KGDD), and 268-327 (GIQG…KGLK). 3 disordered regions span residues 87 to 107 (NKGE…GDNG), 120 to 458 (FNGS…DKGD), and 479 to 543 (IIGD…KGDI). N-linked (GlcNAc...) asparagine; by host glycosylation is found at N106 and N121. Basic and acidic residues-rich tracts occupy residues 126 to 141 (IKGD…DKGQ) and 149 to 161 (QKGE…DDGI). N183 carries N-linked (GlcNAc...) asparagine; by host glycosylation. Basic and acidic residues-rich tracts occupy residues 212–224 (IKGD…EDGI) and 233–245 (SKGE…DDGT). A compositionally biased stretch (low complexity) spans 246–260 (KGITGLKGTKGNSGS). Positions 294-341 (KGSDGDKGNKGLDGIKGDLGDDGIKGDKGIKGLKGDTGNSDKGDKGSK) are enriched in basic and acidic residues. N-linked (GlcNAc...) asparagine; by host glycosylation is found at N345 and N360. Collagen-like domains are found at residues 352–411 (GDKG…KGLV) and 430–489 (GDKG…KGIK). Basic and acidic residues-rich tracts occupy residues 354-368 (KGSK…ESGD), 377-390 (SKGD…KGDL), and 428-458 (SKGD…DKGD). A compositionally biased stretch (low complexity) spans 480-494 (IGDNGSKGIKGSSNN). N-linked (GlcNAc...) asparagine; by host glycosylation occurs at N483. 3 stretches are compositionally biased toward basic and acidic residues: residues 495–504 (KGDKGDKGNT), 515–525 (IKGDKGIKGSK), and 533–543 (EKGEKGTKGDI). The 59-residue stretch at 512-570 (TKGIKGDKGIKGSKGDLGSVGEKGEKGTKGDIGTKGETGLKGIIGDKGELGSKGIKGLS) folds into the Collagen-like 6 domain. N709, N712, and N715 each carry an N-linked (GlcNAc...) asparagine; by host glycan. The segment covering 757–771 (GGGGASAFGNGGRGG) has biased composition (gly residues). Residues 757–804 (GGGGASAFGNGGRGGNTTQAATKGEYGSGGGGGSEFSPSGSTNGGDGG) form a disordered region. A glycan (N-linked (GlcNAc...) asparagine; by host) is linked at N772.

In terms of processing, may be hydroxylated on lysine by the viral-encoded procollagen-lysine,2-oxoglutarate 5-dioxygenase.

Its subcellular location is the virion. In terms of biological role, may participate in the formation of a layer of cross-linked glycosylated fibrils at the viral surface thus giving it a hairy-like appearance. This is Collagen-like protein 4 from Acanthamoeba polyphaga (Amoeba).